The chain runs to 611 residues: Dihydroxy-acid dehydratase (611 aa).

Residue aspartate 81 coordinates Mg(2+). A [2Fe-2S] cluster-binding site is contributed by cysteine 122. Mg(2+)-binding residues include aspartate 123 and lysine 124. Lysine 124 is modified (N6-carboxylysine). Residue cysteine 195 coordinates [2Fe-2S] cluster. Glutamate 491 contributes to the Mg(2+) binding site. The active-site Proton acceptor is the serine 517.

It belongs to the IlvD/Edd family. In terms of assembly, homodimer. Requires [2Fe-2S] cluster as cofactor. Mg(2+) is required as a cofactor.

It catalyses the reaction (2R)-2,3-dihydroxy-3-methylbutanoate = 3-methyl-2-oxobutanoate + H2O. The enzyme catalyses (2R,3R)-2,3-dihydroxy-3-methylpentanoate = (S)-3-methyl-2-oxopentanoate + H2O. Its pathway is amino-acid biosynthesis; L-isoleucine biosynthesis; L-isoleucine from 2-oxobutanoate: step 3/4. The protein operates within amino-acid biosynthesis; L-valine biosynthesis; L-valine from pyruvate: step 3/4. Its function is as follows. Functions in the biosynthesis of branched-chain amino acids. Catalyzes the dehydration of (2R,3R)-2,3-dihydroxy-3-methylpentanoate (2,3-dihydroxy-3-methylvalerate) into 2-oxo-3-methylpentanoate (2-oxo-3-methylvalerate) and of (2R)-2,3-dihydroxy-3-methylbutanoate (2,3-dihydroxyisovalerate) into 2-oxo-3-methylbutanoate (2-oxoisovalerate), the penultimate precursor to L-isoleucine and L-valine, respectively. The protein is Dihydroxy-acid dehydratase of Actinobacillus pleuropneumoniae serotype 3 (strain JL03).